A 385-amino-acid polypeptide reads, in one-letter code: Meiotic recombination protein SPO11-2 (385 aa).

The region spanning L24–A169 is the Topo IIA-type catalytic domain. The active-site O-(5'-phospho-DNA)-tyrosine intermediate is Y126. Mg(2+) is bound by residues E219 and D272.

This sequence belongs to the TOP6A family. Interacts with TOP6B. The cofactor is Mg(2+). Highly expressed in flowers before pollination. Expressed in roots and shoots.

It localises to the nucleus. It catalyses the reaction ATP-dependent breakage, passage and rejoining of double-stranded DNA.. Its function is as follows. Required for meiotic recombination. Mediates DNA cleavage that forms the double-strand breaks (DSB) that initiate meiotic recombination. This chain is Meiotic recombination protein SPO11-2 (SPO11-2), found in Oryza sativa subsp. indica (Rice).